The sequence spans 269 residues: MTNNTRGYIQLHPFHLVGPSPWPMFTSFSLMNLALSLGLTAHGYMNNNMFMLLSTMTVLYSMTLWFKDIMAESTYLGDHTVAVKRGLMQGFLMFVVSEMLMFSSLFWAFLHSALNPTVEMGMSWPPAGMEAISAAELPLLNTMILLASGVTMTYAHHALMNGNRQNTLYGFAYSTLLMVLFVMFQGLEYTYAGFTITDGVYGSTFFALTGLHGLHMMMLIMMLAMCTMRVYNYDFTNTSHVGAETTILYLHVLDVMWLFMYMIVYWWGA.

7 helical membrane-spanning segments follow: residues 21-41, 49-69, 90-110, 132-152, 167-187, 205-225, and 247-267; these read PWPMFTSFSLMNLALSLGLTA, MFMLLSTMTVLYSMTLWFKDI, GFLMFVVSEMLMFSSLFWAFL, ISAAELPLLNTMILLASGVTM, TLYGFAYSTLLMVLFVMFQGL, FFALTGLHGLHMMMLIMMLAM, and ILYLHVLDVMWLFMYMIVYWW.

It belongs to the cytochrome c oxidase subunit 3 family. As to quaternary structure, component of the cytochrome c oxidase (complex IV, CIV), a multisubunit enzyme composed of a catalytic core of 3 subunits and several supernumerary subunits. The complex exists as a monomer or a dimer and forms supercomplexes (SCs) in the inner mitochondrial membrane with ubiquinol-cytochrome c oxidoreductase (cytochrome b-c1 complex, complex III, CIII).

The protein resides in the mitochondrion inner membrane. The enzyme catalyses 4 Fe(II)-[cytochrome c] + O2 + 8 H(+)(in) = 4 Fe(III)-[cytochrome c] + 2 H2O + 4 H(+)(out). In terms of biological role, component of the cytochrome c oxidase, the last enzyme in the mitochondrial electron transport chain which drives oxidative phosphorylation. The respiratory chain contains 3 multisubunit complexes succinate dehydrogenase (complex II, CII), ubiquinol-cytochrome c oxidoreductase (cytochrome b-c1 complex, complex III, CIII) and cytochrome c oxidase (complex IV, CIV), that cooperate to transfer electrons derived from NADH and succinate to molecular oxygen, creating an electrochemical gradient over the inner membrane that drives transmembrane transport and the ATP synthase. Cytochrome c oxidase is the component of the respiratory chain that catalyzes the reduction of oxygen to water. Electrons originating from reduced cytochrome c in the intermembrane space (IMS) are transferred via the dinuclear copper A center (CU(A)) of subunit 2 and heme A of subunit 1 to the active site in subunit 1, a binuclear center (BNC) formed by heme A3 and copper B (CU(B)). The BNC reduces molecular oxygen to 2 water molecules using 4 electrons from cytochrome c in the IMS and 4 protons from the mitochondrial matrix. The sequence is that of Cytochrome c oxidase subunit 3 (COX3) from Debaryomyces hansenii (strain ATCC 36239 / CBS 767 / BCRC 21394 / JCM 1990 / NBRC 0083 / IGC 2968) (Yeast).